The sequence spans 612 residues: Dihydroxy-acid dehydratase (612 aa).

Residue D81 participates in Mg(2+) binding. Residue C122 coordinates [2Fe-2S] cluster. Mg(2+) contacts are provided by D123 and K124. The residue at position 124 (K124) is an N6-carboxylysine. A [2Fe-2S] cluster-binding site is contributed by C195. E491 is a Mg(2+) binding site. Residue S517 is the Proton acceptor of the active site.

It belongs to the IlvD/Edd family. In terms of assembly, homodimer. [2Fe-2S] cluster is required as a cofactor. The cofactor is Mg(2+).

It carries out the reaction (2R)-2,3-dihydroxy-3-methylbutanoate = 3-methyl-2-oxobutanoate + H2O. The enzyme catalyses (2R,3R)-2,3-dihydroxy-3-methylpentanoate = (S)-3-methyl-2-oxopentanoate + H2O. The protein operates within amino-acid biosynthesis; L-isoleucine biosynthesis; L-isoleucine from 2-oxobutanoate: step 3/4. It functions in the pathway amino-acid biosynthesis; L-valine biosynthesis; L-valine from pyruvate: step 3/4. In terms of biological role, functions in the biosynthesis of branched-chain amino acids. Catalyzes the dehydration of (2R,3R)-2,3-dihydroxy-3-methylpentanoate (2,3-dihydroxy-3-methylvalerate) into 2-oxo-3-methylpentanoate (2-oxo-3-methylvalerate) and of (2R)-2,3-dihydroxy-3-methylbutanoate (2,3-dihydroxyisovalerate) into 2-oxo-3-methylbutanoate (2-oxoisovalerate), the penultimate precursor to L-isoleucine and L-valine, respectively. The chain is Dihydroxy-acid dehydratase from Haemophilus influenzae (strain 86-028NP).